Reading from the N-terminus, the 195-residue chain is Segregation and condensation protein B (195 aa).

Residues leucine 169–glutamate 195 are disordered.

Belongs to the ScpB family. As to quaternary structure, homodimer. Homodimerization may be required to stabilize the binding of ScpA to the Smc head domains. Component of a cohesin-like complex composed of ScpA, ScpB and the Smc homodimer, in which ScpA and ScpB bind to the head domain of Smc. The presence of the three proteins is required for the association of the complex with DNA.

The protein localises to the cytoplasm. Functionally, participates in chromosomal partition during cell division. May act via the formation of a condensin-like complex containing Smc and ScpA that pull DNA away from mid-cell into both cell halves. The protein is Segregation and condensation protein B of Moorella thermoacetica (strain ATCC 39073 / JCM 9320).